A 177-amino-acid polypeptide reads, in one-letter code: Protein C (177 aa).

The segment covering 1 to 10 (MSTKAWNASR) has biased composition (polar residues). The interval 1 to 38 (MSTKAWNASRLSGPDPSTPWSLRKPLQHGSRPPKGKRL) is disordered.

It belongs to the morbillivirus protein C family.

This Rinderpest virus (strain RBOK) (RDV) protein is Protein C (P/V/C).